The chain runs to 397 residues: Nuclear RNA export factor 5 (397 aa).

The RRM domain occupies 13–92; the sequence is WFKVTIPYGI…IFVSHFTAPY (80 aa). LRR repeat units lie at residues 160-185, 186-209, 210-237, and 238-265; these read ELLS…EKAP, KVKT…VKGL, KLEE…AIRD, and CFPK…ETMK. The region spanning 280–367 is the NTF2; truncated domain; the sequence is LVLQFLQQSN…ESQRWWCLLS (88 aa).

It belongs to the NXF family. In terms of assembly, interacts with NXT1 and NXT2.

It localises to the cytoplasm. The protein localises to the nucleus. Could be involved in the export of mRNA from the nucleus to the cytoplasm. Could also have a role in polarized cytoplasmic transport and localization of mRNA in neurons. The protein is Nuclear RNA export factor 5 (NXF5) of Homo sapiens (Human).